A 454-amino-acid polypeptide reads, in one-letter code: tRNA modification GTPase MnmE (454 aa).

Residues R23, E80, and K120 each contribute to the (6S)-5-formyl-5,6,7,8-tetrahydrofolate site. The region spanning 216–377 (GMKVVIAGRP…LRNHLKQSMG (162 aa)) is the TrmE-type G domain. N226 is a K(+) binding site. Residues 226 to 231 (NAGKSS), 245 to 251 (TDIAGTT), 270 to 273 (DTAG), 335 to 338 (NKAD), and 358 to 360 (SAR) each bind GTP. S230 lines the Mg(2+) pocket. K(+)-binding residues include T245, I247, and T250. Residue T251 coordinates Mg(2+). (6S)-5-formyl-5,6,7,8-tetrahydrofolate is bound at residue K454.

This sequence belongs to the TRAFAC class TrmE-Era-EngA-EngB-Septin-like GTPase superfamily. TrmE GTPase family. Homodimer. Heterotetramer of two MnmE and two MnmG subunits. Requires K(+) as cofactor.

It is found in the cytoplasm. Exhibits a very high intrinsic GTPase hydrolysis rate. Involved in the addition of a carboxymethylaminomethyl (cmnm) group at the wobble position (U34) of certain tRNAs, forming tRNA-cmnm(5)s(2)U34. The chain is tRNA modification GTPase MnmE from Escherichia coli O17:K52:H18 (strain UMN026 / ExPEC).